A 2601-amino-acid polypeptide reads, in one-letter code: Centrosomal protein of 295 kDa (2601 aa).

Positions 1–560 (MKRKVVNTHK…KKTQPTGVGI (560 aa)) are necessary for centriole targeting and microtubule association. A Phosphoserine modification is found at Ser-14. Coiled-coil stretches lie at residues 207-273 (KRPD…EDLA) and 500-552 (AARI…KRKK). Phosphoserine occurs at positions 654 and 938. The interval 1008 to 1029 (PSADTKSGKIQEQHSSKSEKGL) is disordered. Basic and acidic residues predominate over residues 1013–1027 (KSGKIQEQHSSKSEK). Coiled-coil stretches lie at residues 1053–1082 (LHDS…VELL) and 1498–1544 (IQSH…VSSE). Residues 1558-1580 (ADSERTQKSFPTKSNDTLPSSHR) form a disordered region. The segment covering 1565 to 1577 (KSFPTKSNDTLPS) has biased composition (polar residues). At Ser-1637 the chain carries Phosphoserine. Residues 1728–1758 (QEKLLVQRQTALQQQIQKHEETLKDFFKDSQ) adopt a coiled-coil conformation. 3 stretches are compositionally biased toward basic and acidic residues: residues 1795 to 1827 (RHAD…DLGR), 1985 to 2003 (FSEH…KEEE), and 2100 to 2112 (DNRD…DSSS). Disordered stretches follow at residues 1795–1834 (RHAD…KPPV), 1979–2004 (LTDP…EEET), and 2085–2117 (HPDF…SHCA). Thr-2473 is subject to Phosphothreonine. Residues 2478–2601 (SLQEAFIKRK…LEKLRAKNTC (124 aa)) form an ALMS motif region. The stretch at 2556-2581 (RLYNQLAEVKQQKEEKTKQEAYAQNR) forms a coiled coil.

In terms of assembly, interacts (via ALMS motif) with microtubules; this interaction is direct.

The protein localises to the cytoplasm. Its subcellular location is the cytoskeleton. It is found in the microtubule organizing center. It localises to the centrosome. The protein resides in the centriole. The protein localises to the spindle. In terms of biological role, centriole-enriched microtubule-binding protein involved in centriole biogenesis. Essential for the generation of the distal portion of new-born centrioles in a CPAP- and CEP120-mediated elongation dependent manner during the cell cycle S/G2 phase after formation of the initiating cartwheel structure. Required for the recruitment of centriolar proteins, such as POC1B, POC5 and CEP135, into the distal portion of centrioles. Also required for centriole-to-centrosome conversion during mitotic progression, but is dispensable for cartwheel removal or centriole disengagement. Binds to and stabilizes centriolar microtubule. May be involved in ciliogenesis. The chain is Centrosomal protein of 295 kDa from Homo sapiens (Human).